A 735-amino-acid polypeptide reads, in one-letter code: Disintegrin and metalloproteinase domain-containing protein 2 (735 aa).

The N-terminal stretch at methionine 1–methionine 16 is a signal peptide. Residues aspartate 17–glutamine 174 constitute a propeptide that is removed on maturation. N-linked (GlcNAc...) asparagine glycans are attached at residues asparagine 122 and asparagine 220. The Extracellular portion of the chain corresponds to aspartate 175 to arginine 686. Residues lysine 178–proline 375 enclose the Peptidase M12B domain. Disulfide bonds link cysteine 287-cysteine 370, cysteine 329-cysteine 354, cysteine 331-cysteine 336, and cysteine 445-cysteine 465. 3 N-linked (GlcNAc...) asparagine glycosylation sites follow: asparagine 353, asparagine 459, and asparagine 566. Residues glutamine 384 to threonine 473 enclose the Disintegrin domain. The region spanning leucine 612–serine 645 is the EGF-like domain. 3 disulfide bridges follow: cysteine 616/cysteine 627, cysteine 621/cysteine 633, and cysteine 635/cysteine 644. Residues tryptophan 687 to valine 707 form a helical membrane-spanning segment. The Cytoplasmic segment spans residues lysine 708–glycine 735. Serine 729 carries the post-translational modification Phosphoserine.

The prodomain and the metalloprotease domain are cleaved during the epididymal maturation of the spermatozoa. As to expression, expressed specifically in spermatogenic cells in the seminiferous cells. Not detected in fetal tissues.

Its subcellular location is the membrane. In terms of biological role, sperm surface membrane protein that may be involved in sperm-egg plasma membrane adhesion and fusion during fertilization. Could have a direct role in sperm-zona binding or migration of sperm from the uterus into the oviduct. Interactions with egg membrane could be mediated via binding between its disintegrin-like domain to one or more integrins receptors on the egg. This is a non catalytic metalloprotease-like protein. The chain is Disintegrin and metalloproteinase domain-containing protein 2 (ADAM2) from Homo sapiens (Human).